The primary structure comprises 209 residues: Ribosomal RNA large subunit methyltransferase E (209 aa).

Residues Gly-63, Trp-65, Asp-83, Asp-99, and Asp-124 each coordinate S-adenosyl-L-methionine. The active-site Proton acceptor is the Lys-164.

This sequence belongs to the class I-like SAM-binding methyltransferase superfamily. RNA methyltransferase RlmE family.

The protein localises to the cytoplasm. It carries out the reaction uridine(2552) in 23S rRNA + S-adenosyl-L-methionine = 2'-O-methyluridine(2552) in 23S rRNA + S-adenosyl-L-homocysteine + H(+). Specifically methylates the uridine in position 2552 of 23S rRNA at the 2'-O position of the ribose in the fully assembled 50S ribosomal subunit. This is Ribosomal RNA large subunit methyltransferase E from Shewanella denitrificans (strain OS217 / ATCC BAA-1090 / DSM 15013).